The primary structure comprises 414 residues: Gamma-glutamyl phosphate reductase (414 aa).

It belongs to the gamma-glutamyl phosphate reductase family.

Its subcellular location is the cytoplasm. The enzyme catalyses L-glutamate 5-semialdehyde + phosphate + NADP(+) = L-glutamyl 5-phosphate + NADPH + H(+). It functions in the pathway amino-acid biosynthesis; L-proline biosynthesis; L-glutamate 5-semialdehyde from L-glutamate: step 2/2. In terms of biological role, catalyzes the NADPH-dependent reduction of L-glutamate 5-phosphate into L-glutamate 5-semialdehyde and phosphate. The product spontaneously undergoes cyclization to form 1-pyrroline-5-carboxylate. The sequence is that of Gamma-glutamyl phosphate reductase from Geobacillus thermodenitrificans (strain NG80-2).